Here is a 342-residue protein sequence, read N- to C-terminus: 4-hydroxy-2-oxovalerate aldolase (342 aa).

In terms of domain architecture, Pyruvate carboxyltransferase spans 7–257 (VWITEVALRD…KTGIDLYKMM (251 aa)). Substrate is bound at residue 15-16 (RD). Residue Asp-16 participates in Mn(2+) binding. The active-site Proton acceptor is His-19. Ser-169 and His-196 together coordinate substrate. The Mn(2+) site is built by His-196 and His-198. Tyr-287 lines the substrate pocket.

It belongs to the 4-hydroxy-2-oxovalerate aldolase family.

It carries out the reaction (S)-4-hydroxy-2-oxopentanoate = acetaldehyde + pyruvate. The chain is 4-hydroxy-2-oxovalerate aldolase (pheE) from Geobacillus stearothermophilus (Bacillus stearothermophilus).